The sequence spans 428 residues: Phosphomethylpyrimidine synthase 2 (428 aa).

Substrate-binding positions include Met94, Tyr123, His162, Ser184 to Gly186, Asn225 to Arg228, and Glu264. Residue His268 coordinates Zn(2+). Tyr291 contacts substrate. Zn(2+) is bound at residue His332. [4Fe-4S] cluster-binding residues include Cys408, Cys411, and Cys415.

The protein belongs to the ThiC family. It depends on [4Fe-4S] cluster as a cofactor.

It carries out the reaction 5-amino-1-(5-phospho-beta-D-ribosyl)imidazole + S-adenosyl-L-methionine = 4-amino-2-methyl-5-(phosphooxymethyl)pyrimidine + CO + 5'-deoxyadenosine + formate + L-methionine + 3 H(+). Its pathway is cofactor biosynthesis; thiamine diphosphate biosynthesis. Catalyzes the synthesis of the hydroxymethylpyrimidine phosphate (HMP-P) moiety of thiamine from aminoimidazole ribotide (AIR) in a radical S-adenosyl-L-methionine (SAM)-dependent reaction. In Methanosarcina mazei (strain ATCC BAA-159 / DSM 3647 / Goe1 / Go1 / JCM 11833 / OCM 88) (Methanosarcina frisia), this protein is Phosphomethylpyrimidine synthase 2.